The sequence spans 424 residues: Kynureninase (424 aa).

Residues leucine 106, threonine 107, 134–137 (FPSD), aspartate 219, histidine 222, and tyrosine 244 each bind pyridoxal 5'-phosphate. Lysine 245 carries the post-translational modification N6-(pyridoxal phosphate)lysine. Tryptophan 274 and asparagine 302 together coordinate pyridoxal 5'-phosphate.

It belongs to the kynureninase family. As to quaternary structure, homodimer. The cofactor is pyridoxal 5'-phosphate.

It carries out the reaction L-kynurenine + H2O = anthranilate + L-alanine + H(+). The enzyme catalyses 3-hydroxy-L-kynurenine + H2O = 3-hydroxyanthranilate + L-alanine + H(+). Its pathway is amino-acid degradation; L-kynurenine degradation; L-alanine and anthranilate from L-kynurenine: step 1/1. It functions in the pathway cofactor biosynthesis; NAD(+) biosynthesis; quinolinate from L-kynurenine: step 2/3. Catalyzes the cleavage of L-kynurenine (L-Kyn) and L-3-hydroxykynurenine (L-3OHKyn) into anthranilic acid (AA) and 3-hydroxyanthranilic acid (3-OHAA), respectively. The sequence is that of Kynureninase from Xanthomonas campestris pv. campestris (strain B100).